We begin with the raw amino-acid sequence, 190 residues long: Protein GrpE (190 aa).

The interval 1 to 41 is disordered; that stretch reads MAKEKQEEQQKQTAPENEKAPKKDIKKEASDKKGDQTSKLK.

It belongs to the GrpE family. Homodimer.

It is found in the cytoplasm. Its function is as follows. Participates actively in the response to hyperosmotic and heat shock by preventing the aggregation of stress-denatured proteins, in association with DnaK and GrpE. It is the nucleotide exchange factor for DnaK and may function as a thermosensor. Unfolded proteins bind initially to DnaJ; upon interaction with the DnaJ-bound protein, DnaK hydrolyzes its bound ATP, resulting in the formation of a stable complex. GrpE releases ADP from DnaK; ATP binding to DnaK triggers the release of the substrate protein, thus completing the reaction cycle. Several rounds of ATP-dependent interactions between DnaJ, DnaK and GrpE are required for fully efficient folding. This Limosilactobacillus reuteri (strain DSM 20016) (Lactobacillus reuteri) protein is Protein GrpE.